The primary structure comprises 1194 residues: ATP-dependent RNA helicase DHX30 (1194 aa).

Residues 1 to 10 are compositionally biased toward basic and acidic residues; the sequence is MFSLDSFRKD. Residues 1–27 form a disordered region; sequence MFSLDSFRKDRAQHRQRQCKLPPPRLP. S6 is modified (phosphoserine). In terms of domain architecture, DRBM spans 53–121; sequence PKNLLNSVIG…QAAAAACQLF (69 aa). Positions 150-199 are disordered; it reads ADSWWRPEPTMPPTSWRQLNPESIRPGGPGGLSRSLGREEEEDEEEELEE. Over residues 188-199 the composition is skewed to acidic residues; that stretch reads EEEEDEEEELEE. 2 positions are modified to phosphoserine: S226 and S380. In terms of domain architecture, Helicase ATP-binding spans 444 to 612; that stretch reads LNAIEQHPVV…FGGCPVIKVP (169 aa). 457-464 provides a ligand contact to ATP; it reads GDTGCGKT. The short motif at 559 to 562 is the DEAH box element; that stretch reads DEVH. Residues 654–827 form the Helicase C-terminal domain; sequence LVTDLVLHID…NLVLQAKIHM (174 aa).

The protein belongs to the DEAD box helicase family. DEAH subfamily. As to quaternary structure, identified in a complex with TFAM and SSBP1. Interacts (via N-terminus) with ZC3HAV1 (via N-terminal domain) in an RNA-independent manner. Found in a complex with GRSF1, DDX28, FASTKD2 and FASTKD5.

It localises to the cytoplasm. The protein resides in the mitochondrion. It is found in the mitochondrion matrix. Its subcellular location is the mitochondrion nucleoid. It carries out the reaction ATP + H2O = ADP + phosphate + H(+). Functionally, RNA-dependent helicase. Plays an important role in the assembly of the mitochondrial large ribosomal subunit. Required for optimal function of the zinc-finger antiviral protein ZC3HAV1. Associates with mitochondrial DNA. Involved in nervous system development and differentiation through its involvement in the up-regulation of a number of genes which are required for neurogenesis, including GSC, NCAM1, neurogenin, and NEUROD. This Pongo abelii (Sumatran orangutan) protein is ATP-dependent RNA helicase DHX30 (DHX30).